Consider the following 488-residue polypeptide: Bifunctional protein HldE (488 aa).

Residues 1-331 (MTELSALVER…VALHREDLTL (331 aa)) are ribokinase. 206–209 (NRKE) is an ATP binding site. Aspartate 276 is a catalytic residue. The cytidylyltransferase stretch occupies residues 358-488 (FTNGCFDLLH…TNTIKKMNGN (131 aa)).

It in the N-terminal section; belongs to the carbohydrate kinase PfkB family. This sequence in the C-terminal section; belongs to the cytidylyltransferase family. As to quaternary structure, homodimer.

The enzyme catalyses D-glycero-beta-D-manno-heptose 7-phosphate + ATP = D-glycero-beta-D-manno-heptose 1,7-bisphosphate + ADP + H(+). The catalysed reaction is D-glycero-beta-D-manno-heptose 1-phosphate + ATP + H(+) = ADP-D-glycero-beta-D-manno-heptose + diphosphate. The protein operates within nucleotide-sugar biosynthesis; ADP-L-glycero-beta-D-manno-heptose biosynthesis; ADP-L-glycero-beta-D-manno-heptose from D-glycero-beta-D-manno-heptose 7-phosphate: step 1/4. It functions in the pathway nucleotide-sugar biosynthesis; ADP-L-glycero-beta-D-manno-heptose biosynthesis; ADP-L-glycero-beta-D-manno-heptose from D-glycero-beta-D-manno-heptose 7-phosphate: step 3/4. Catalyzes the phosphorylation of D-glycero-D-manno-heptose 7-phosphate at the C-1 position to selectively form D-glycero-beta-D-manno-heptose-1,7-bisphosphate. In terms of biological role, catalyzes the ADP transfer from ATP to D-glycero-beta-D-manno-heptose 1-phosphate, yielding ADP-D-glycero-beta-D-manno-heptose. This is Bifunctional protein HldE from Paramagnetospirillum magneticum (strain ATCC 700264 / AMB-1) (Magnetospirillum magneticum).